Consider the following 90-residue polypeptide: DNA/RNA-binding protein Alba (90 aa).

An N6-acetyllysine modification is found at K11.

It belongs to the histone-like Alba family. In terms of processing, acetylated. Acetylation at Lys-11 decreases DNA-binding affinity.

The protein resides in the cytoplasm. It is found in the chromosome. Binds double-stranded DNA tightly but without sequence specificity. Involved in DNA compaction. The polypeptide is DNA/RNA-binding protein Alba (Picrophilus torridus (strain ATCC 700027 / DSM 9790 / JCM 10055 / NBRC 100828 / KAW 2/3)).